The chain runs to 173 residues: Inorganic pyrophosphatase (173 aa).

Lysine 28, arginine 42, and tyrosine 54 together coordinate substrate. 3 residues coordinate Mg(2+): aspartate 64, aspartate 69, and aspartate 101. Tyrosine 140 lines the substrate pocket.

It belongs to the PPase family. Homohexamer. It depends on Mg(2+) as a cofactor.

The protein localises to the cytoplasm. It catalyses the reaction diphosphate + H2O = 2 phosphate + H(+). Functionally, catalyzes the hydrolysis of inorganic pyrophosphate (PPi) forming two phosphate ions. The sequence is that of Inorganic pyrophosphatase from Helicobacter pylori (strain J99 / ATCC 700824) (Campylobacter pylori J99).